We begin with the raw amino-acid sequence, 44 residues long: Cytochrome b559 subunit beta (44 aa).

A helical transmembrane segment spans residues 19–35 (WLSVHALAVPTVFFIGA). A heme-binding site is contributed by His-23.

The protein belongs to the PsbE/PsbF family. Heterodimer of an alpha subunit and a beta subunit. PSII is composed of 1 copy each of membrane proteins PsbA, PsbB, PsbC, PsbD, PsbE, PsbF, PsbH, PsbI, PsbJ, PsbK, PsbL, PsbM, PsbT, PsbX, PsbY, PsbZ, Psb30/Ycf12, peripheral proteins PsbO, CyanoQ (PsbQ), PsbU, PsbV and a large number of cofactors. It forms dimeric complexes. Requires heme b as cofactor.

The protein resides in the cellular thylakoid membrane. Its function is as follows. This b-type cytochrome is tightly associated with the reaction center of photosystem II (PSII). PSII is a light-driven water:plastoquinone oxidoreductase that uses light energy to abstract electrons from H(2)O, generating O(2) and a proton gradient subsequently used for ATP formation. It consists of a core antenna complex that captures photons, and an electron transfer chain that converts photonic excitation into a charge separation. This Rippkaea orientalis (strain PCC 8801 / RF-1) (Cyanothece sp. (strain PCC 8801)) protein is Cytochrome b559 subunit beta.